The sequence spans 717 residues: Fatty acid oxidation complex subunit alpha (717 aa).

The segment at 1-190 is enoyl-CoA hydratase/isomerase; the sequence is MIHAGNAITV…KDGAVDAVVA (190 aa). Residue aspartate 298 coordinates substrate. The tract at residues 313–717 is 3-hydroxyacyl-CoA dehydrogenase; sequence HPVNQAAVLG…MAANNKKFYG (405 aa). NAD(+) is bound by residues methionine 326, aspartate 345, 402 to 404, lysine 409, and serine 431; that span reads VTE. Histidine 452 acts as the For 3-hydroxyacyl-CoA dehydrogenase activity in catalysis. Asparagine 455 is a binding site for NAD(+). A substrate-binding site is contributed by asparagine 502.

It in the N-terminal section; belongs to the enoyl-CoA hydratase/isomerase family. In the C-terminal section; belongs to the 3-hydroxyacyl-CoA dehydrogenase family. Heterotetramer of two alpha chains (FadB) and two beta chains (FadA).

It carries out the reaction a (3S)-3-hydroxyacyl-CoA + NAD(+) = a 3-oxoacyl-CoA + NADH + H(+). The enzyme catalyses a (3S)-3-hydroxyacyl-CoA = a (2E)-enoyl-CoA + H2O. It catalyses the reaction a 4-saturated-(3S)-3-hydroxyacyl-CoA = a (3E)-enoyl-CoA + H2O. The catalysed reaction is (3S)-3-hydroxybutanoyl-CoA = (3R)-3-hydroxybutanoyl-CoA. It carries out the reaction a (3Z)-enoyl-CoA = a 4-saturated (2E)-enoyl-CoA. The enzyme catalyses a (3E)-enoyl-CoA = a 4-saturated (2E)-enoyl-CoA. It functions in the pathway lipid metabolism; fatty acid beta-oxidation. In terms of biological role, involved in the aerobic and anaerobic degradation of long-chain fatty acids via beta-oxidation cycle. Catalyzes the formation of 3-oxoacyl-CoA from enoyl-CoA via L-3-hydroxyacyl-CoA. It can also use D-3-hydroxyacyl-CoA and cis-3-enoyl-CoA as substrate. The chain is Fatty acid oxidation complex subunit alpha from Acinetobacter baumannii (strain SDF).